Here is a 664-residue protein sequence, read N- to C-terminus: Glycine--tRNA ligase beta subunit (664 aa).

Belongs to the class-II aminoacyl-tRNA synthetase family. Tetramer of two alpha and two beta subunits.

The protein resides in the cytoplasm. It carries out the reaction tRNA(Gly) + glycine + ATP = glycyl-tRNA(Gly) + AMP + diphosphate. The polypeptide is Glycine--tRNA ligase beta subunit (Rickettsia peacockii (strain Rustic)).